The chain runs to 150 residues: MRAVVQRALGARVEVGGQVVGAIERGLVAFVGAAKDDDDADADHVASKIAGLRVFSDDAGKMSRALADVRGGGVLAISQFTLFGDVRRGLRPSFDGAMEPVRAEALYDRFVAALRARGLTVATGRFRADMRVFVENDGPVTILIDSKRTF.

The Gly-cisPro motif, important for rejection of L-amino acids motif lies at 138 to 139 (GP).

This sequence belongs to the DTD family. As to quaternary structure, homodimer.

It is found in the cytoplasm. It catalyses the reaction glycyl-tRNA(Ala) + H2O = tRNA(Ala) + glycine + H(+). The enzyme catalyses a D-aminoacyl-tRNA + H2O = a tRNA + a D-alpha-amino acid + H(+). Its function is as follows. An aminoacyl-tRNA editing enzyme that deacylates mischarged D-aminoacyl-tRNAs. Also deacylates mischarged glycyl-tRNA(Ala), protecting cells against glycine mischarging by AlaRS. Acts via tRNA-based rather than protein-based catalysis; rejects L-amino acids rather than detecting D-amino acids in the active site. By recycling D-aminoacyl-tRNA to D-amino acids and free tRNA molecules, this enzyme counteracts the toxicity associated with the formation of D-aminoacyl-tRNA entities in vivo and helps enforce protein L-homochirality. The sequence is that of D-aminoacyl-tRNA deacylase from Sorangium cellulosum (strain So ce56) (Polyangium cellulosum (strain So ce56)).